Here is a 193-residue protein sequence, read N- to C-terminus: Leucyl/phenylalanyl-tRNA--protein transferase (193 aa).

Belongs to the L/F-transferase family.

The protein localises to the cytoplasm. It catalyses the reaction N-terminal L-lysyl-[protein] + L-leucyl-tRNA(Leu) = N-terminal L-leucyl-L-lysyl-[protein] + tRNA(Leu) + H(+). The catalysed reaction is N-terminal L-arginyl-[protein] + L-leucyl-tRNA(Leu) = N-terminal L-leucyl-L-arginyl-[protein] + tRNA(Leu) + H(+). The enzyme catalyses L-phenylalanyl-tRNA(Phe) + an N-terminal L-alpha-aminoacyl-[protein] = an N-terminal L-phenylalanyl-L-alpha-aminoacyl-[protein] + tRNA(Phe). In terms of biological role, functions in the N-end rule pathway of protein degradation where it conjugates Leu, Phe and, less efficiently, Met from aminoacyl-tRNAs to the N-termini of proteins containing an N-terminal arginine or lysine. This Gloeobacter violaceus (strain ATCC 29082 / PCC 7421) protein is Leucyl/phenylalanyl-tRNA--protein transferase.